Consider the following 131-residue polypeptide: Small ribosomal subunit protein uS8 (131 aa).

This sequence belongs to the universal ribosomal protein uS8 family. Part of the 30S ribosomal subunit. Contacts proteins S5 and S12.

Functionally, one of the primary rRNA binding proteins, it binds directly to 16S rRNA central domain where it helps coordinate assembly of the platform of the 30S subunit. The chain is Small ribosomal subunit protein uS8 from Aromatoleum aromaticum (strain DSM 19018 / LMG 30748 / EbN1) (Azoarcus sp. (strain EbN1)).